A 425-amino-acid chain; its full sequence is Iron-sulfur cluster assembly factor IBA57 homolog, mitochondrial (425 aa).

Residues 1–28 (MPPRLRPGSVCSRCHFHRRSLSSTAFLA) constitute a mitochondrion transit peptide. The segment at 403 to 425 (RQRQTKEDVHRAKSGTEQIEEED) is disordered.

Belongs to the GcvT family. CAF17/IBA57 subfamily.

The protein localises to the mitochondrion matrix. This is Iron-sulfur cluster assembly factor IBA57 homolog, mitochondrial (CAF17) from Coccidioides immitis (strain RS) (Valley fever fungus).